The following is a 299-amino-acid chain: Probable plastid-lipid-associated protein 13, chloroplastic (299 aa).

The N-terminal 48 residues, 1-48, are a transit peptide targeting the chloroplast; it reads MALIHGSVPGTSAVRLVFSTSASPSRFCLNVPVVKQGWKNSCRRRVLR. Position 2 is an N-acetylvaline (Ala-2).

It belongs to the PAP/fibrillin family.

The protein resides in the plastid. It localises to the chloroplast. It is found in the plastoglobule. In Arabidopsis thaliana (Mouse-ear cress), this protein is Probable plastid-lipid-associated protein 13, chloroplastic (PAP13).